Reading from the N-terminus, the 260-residue chain is Carbonic anhydrase 2 (260 aa).

Position 2 is an N-acetylserine (S2). The residue at position 2 (S2) is a Phosphoserine. The region spanning 3–259 is the Alpha-carbonic anhydrase domain; sequence HHWGYGKHNG…LKNRQVRGFP (257 aa). Residue H64 is the Proton donor/acceptor of the active site. Zn(2+) contacts are provided by H94, H96, and H119. 2 positions are modified to phosphoserine: S165 and S172. Residue 198-199 coordinates substrate; it reads TT.

This sequence belongs to the alpha-carbonic anhydrase family. As to quaternary structure, interacts with SLC4A4. Interaction with SLC4A7 regulates SLC4A7 transporter activity. Zn(2+) serves as cofactor.

The protein resides in the cytoplasm. Its subcellular location is the cell membrane. It catalyses the reaction hydrogencarbonate + H(+) = CO2 + H2O. The enzyme catalyses urea = cyanamide + H2O. Its activity is regulated as follows. Inhibited by acetazolamide. Functionally, catalyzes the reversible hydration of carbon dioxide. Can also hydrate cyanamide to urea. Involved in the regulation of fluid secretion into the anterior chamber of the eye. Essential for bone resorption and osteoclast differentiation. Contributes to intracellular pH regulation in the duodenal upper villous epithelium during proton-coupled peptide absorption. Stimulates the chloride-bicarbonate exchange activity of SLC26A6. This chain is Carbonic anhydrase 2 (CA2), found in Bos taurus (Bovine).